Here is a 94-residue protein sequence, read N- to C-terminus: Lipoate-protein ligase A subunit 2 (94 aa).

As to quaternary structure, heterodimer composed of LplA and LplB.

The catalysed reaction is L-lysyl-[lipoyl-carrier protein] + (R)-lipoate + ATP = N(6)-[(R)-lipoyl]-L-lysyl-[lipoyl-carrier protein] + AMP + diphosphate + H(+). It functions in the pathway protein modification; protein lipoylation via exogenous pathway; protein N(6)-(lipoyl)lysine from lipoate: step 1/2. It participates in protein modification; protein lipoylation via exogenous pathway; protein N(6)-(lipoyl)lysine from lipoate: step 2/2. In terms of biological role, part of a lipoate-protein ligase complex that catalyzes both the ATP-dependent activation of exogenously supplied lipoate to lipoyl-AMP and the transfer of the activated lipoyl onto the lipoyl domains of lipoate-dependent enzymes. Can also use octanoate as substrate. This chain is Lipoate-protein ligase A subunit 2 (lplB), found in Thermoplasma acidophilum (strain ATCC 25905 / DSM 1728 / JCM 9062 / NBRC 15155 / AMRC-C165).